A 110-amino-acid polypeptide reads, in one-letter code: Waprin-Thr1 (110 aa).

Residues 1–20 (MYKKGTILVLAYLLIATAVC) form the signal peptide. The 47-residue stretch at 22 to 68 (LSYKEGHCPLRNSVSKCIPRCVSDYQCSFNEKCCPNKCGSESCVQAS) folds into the WAP domain. 4 cysteine pairs are disulfide-bonded: Cys-29–Cys-55, Cys-38–Cys-59, Cys-42–Cys-54, and Cys-48–Cys-64.

Belongs to the venom waprin family. Cys-rich waprin subfamily. Expressed by the venom gland.

The protein localises to the secreted. Functionally, antimicrobial peptides with activity against Gram-positive and Gram-negative bacteria as well as fungi. Recognizes carbohydrates in the microbial cell walls, and induces structural damage to them. Also inhibits microbial serine proteases subtilisin A and proteinase K, as well as human and porcine elastases. Carbohydrates that are recognized are LPS, mannan, peptidoglycan, and N-acetl-D-glucosamine. This Apis mellifera (Honeybee) protein is Waprin-Thr1.